The chain runs to 73 residues: Sec-independent protein translocase protein TatA (73 aa).

Residues 1–21 (MGLSWQQLLILLLVVVVIFGT) form a helical membrane-spanning segment.

This sequence belongs to the TatA/E family. The Tat system comprises two distinct complexes: a TatABC complex, containing multiple copies of TatA, TatB and TatC subunits, and a separate TatA complex, containing only TatA subunits. Substrates initially bind to the TatABC complex, which probably triggers association of the separate TatA complex to form the active translocon.

It localises to the cell inner membrane. Part of the twin-arginine translocation (Tat) system that transports large folded proteins containing a characteristic twin-arginine motif in their signal peptide across membranes. TatA could form the protein-conducting channel of the Tat system. The protein is Sec-independent protein translocase protein TatA of Histophilus somni (strain 129Pt) (Haemophilus somnus).